A 268-amino-acid polypeptide reads, in one-letter code: Probable RNA methyltransferase C2A9.10 (268 aa).

Residues 23–258 (DPRLKCLPDS…RTMYIYKKKG (236 aa)) form the Bin3-type SAM domain.

The protein belongs to the methyltransferase superfamily.

In terms of biological role, probable RNA methyltransferase. In Schizosaccharomyces pombe (strain 972 / ATCC 24843) (Fission yeast), this protein is Probable RNA methyltransferase C2A9.10.